The primary structure comprises 308 residues: Probable D,D-dipeptide transport ATP-binding protein DdpF (308 aa).

In terms of domain architecture, ABC transporter spans 8-243 (LRDVHINFPA…PAHPYTRLLL (236 aa)). An ATP-binding site is contributed by 49 to 56 (GESGCGKS).

Belongs to the ABC transporter superfamily. In terms of assembly, the complex is composed of two ATP-binding proteins (DdpD and DdpF), two transmembrane proteins (DdpB and DdpC) and a solute-binding protein (DdpA).

It localises to the cell inner membrane. Functionally, part of the ABC transporter complex DdpABCDF, which is probably involved in D,D-dipeptide transport. Probably responsible for energy coupling to the transport system. The polypeptide is Probable D,D-dipeptide transport ATP-binding protein DdpF (Escherichia coli (strain K12)).